A 463-amino-acid chain; its full sequence is NEDD8-activating enzyme E1 catalytic subunit (463 aa).

N-acetylalanine is present on A2. Positions 53–70 are interaction with UBE2M N-terminus; sequence HPDFEPSTESLQFLLDTC. ATP is bound by residues 100–124 and 148–171; these read DMDT…GRPK and IQDF…SIIA. Interaction with UBE2M N-terminus regions lie at residues 157–161 and 192–217; these read RQFHI and PSSI…LPGM. The tract at residues 227-229 is interaction with NEDD8; it reads LYP. The active-site Glycyl thioester intermediate is C237. Interaction with NAE1 regions lie at residues 242-248 and 292-295; these read MPRLPEH and YNIR. The interaction with UBE2M N-terminus stretch occupies residues 331–338; it reads IATSAYIP. The segment at 352–357 is interaction with NEDD8; that stretch reads YTYTFE. Positions 368 to 463 are interaction with UBE2M core domain; that stretch reads SQLPQNIQFS…TVLFKLHFTS (96 aa).

It belongs to the ubiquitin-activating E1 family. UBA3 subfamily. Heterodimer of UBA3 and NAE1. Interacts with NEDD8, UBE2F and UBE2M. Binds ESR1 and ESR2 with bound steroid ligand. Interacts with TBATA. In terms of tissue distribution, ubiquitously expressed.

The catalysed reaction is ATP + [NEDD8 protein] + [E1 NEDD8-activating enzyme]-L-cysteine = AMP + diphosphate + [E1 NEDD8-activating enzyme]-S-[NEDD8 protein]-yl-L-cysteine.. Its pathway is protein modification; protein neddylation. With respect to regulation, binding of TP53BP2 to the regulatory subunit NAE1 decreases activity. Catalytic subunit of the dimeric UBA3-NAE1 E1 enzyme. E1 activates NEDD8 by first adenylating its C-terminal glycine residue with ATP, thereafter linking this residue to the side chain of the catalytic cysteine, yielding a NEDD8-UBA3 thioester and free AMP. E1 finally transfers NEDD8 to the catalytic cysteine of UBE2M. Down-regulates steroid receptor activity. Necessary for cell cycle progression. In Homo sapiens (Human), this protein is NEDD8-activating enzyme E1 catalytic subunit (UBA3).